A 182-amino-acid chain; its full sequence is Fatty-acid and retinol-binding protein 2 (182 aa).

Residues 1-17 form the signal peptide; the sequence is MIRAFLVVALASVAVFS. 2 coiled-coil regions span residues 46–73 and 131–152; these read LKAI…EEEF and TLDS…LSDD.

This sequence belongs to the fatty-acid and retinol-binding protein (FARBP) family.

It is found in the secreted. Probably binds lipids. The protein is Fatty-acid and retinol-binding protein 2 (far-2) of Caenorhabditis elegans.